Here is a 140-residue protein sequence, read N- to C-terminus: uncharacterized protein (140 aa).

Belongs to the peptidase S24 family.

This is an uncharacterized protein from Haemophilus influenzae (strain ATCC 51907 / DSM 11121 / KW20 / Rd).